The sequence spans 175 residues: Probable DNA-directed RNA polymerase subunit delta (175 aa).

The HTH HARE-type domain maps to 14–81 (MALVEIAHEI…SDQTWGLRSW (68 aa)). The interval 110–175 (LDLDEFEEVD…YDDEEEDRKD (66 aa)) is disordered.

It belongs to the RpoE family. In terms of assembly, RNAP is composed of a core of 2 alpha, a beta and a beta' subunits. The core is associated with a delta subunit and one of several sigma factors.

In terms of biological role, participates in both the initiation and recycling phases of transcription. In the presence of the delta subunit, RNAP displays an increased specificity of transcription, a decreased affinity for nucleic acids, and an increased efficiency of RNA synthesis because of enhanced recycling. The protein is Probable DNA-directed RNA polymerase subunit delta of Bacillus velezensis (strain DSM 23117 / BGSC 10A6 / LMG 26770 / FZB42) (Bacillus amyloliquefaciens subsp. plantarum).